We begin with the raw amino-acid sequence, 244 residues long: 5-oxoprolinase subunit A (244 aa).

Belongs to the LamB/PxpA family. Forms a complex composed of PxpA, PxpB and PxpC.

It carries out the reaction 5-oxo-L-proline + ATP + 2 H2O = L-glutamate + ADP + phosphate + H(+). Functionally, catalyzes the cleavage of 5-oxoproline to form L-glutamate coupled to the hydrolysis of ATP to ADP and inorganic phosphate. This Salmonella paratyphi A (strain ATCC 9150 / SARB42) protein is 5-oxoprolinase subunit A.